The primary structure comprises 800 residues: Internalin A (800 aa).

The signal sequence occupies residues 1-35 (MRKKRYVWLKSILVAILVFGSGVWINTSNGTNAQA). The region spanning 36 to 76 (ATITQDTPINQIFTDAALAEKMKTVLGKTNVTDTVSQTDLD) is the LRRNT domain. LRR repeat units lie at residues 77 to 98 (QVTTLQADRLGIKSIDGLEYLN), 99 to 120 (NLTQINFSNNQLTDITPLKDLT), 121 to 142 (KLVDILMNNNQIADITPLANLT), 143 to 164 (NLTGLTLFNNQITDIDPLKNLT), 165 to 186 (NLNRLELSSNTISDISALSGLT), 187 to 207 (NLQQLSFGNQVTDLKPLANLT), 208 to 229 (TLERLDISSNKVSDISVLAKLT), 230 to 251 (NLESLIATNNQISDITPLGILT), 252 to 273 (NLDELSLNGNQLKDIGTLASLT), 274 to 295 (NLTDLDLANNQISNLAPLSGLT), 296 to 317 (KLTELKLGANQISNISPLAGLT), 318 to 339 (ALTNLELNENQLEDISPISNLK), 340 to 361 (NLTYLTLYFNNISDISPVSSLT), 362 to 383 (KLQRLFFYNNKVSDVSSLANLT), and 384 to 405 (NINWLSAGHNQISDLTPLANLT). The region spanning 416–505 (AWTNAPVNYK…AIFNAKFHVD (90 aa)) is the LRRCT domain. The stretch at 518-587 (LLTEPAKPVK…TTSQTVDYQG (70 aa)) is one B-1 repeat. The interval 518 to 706 (LLTEPAKPVK…ITLYAQFTKN (189 aa)) is 3 X approximate tandem repeats, type B. The stretch at 588–657 (LLQEPTPPTK…STTQAVDYQG (70 aa)) is one B-2 repeat. The stretch at 658–706 (LLKEPKAPTKAGYTFKGWYDEKTDGKKWDFATDKMPANDITLYAQFTKN) is one B-3 repeat. A disordered region spans residues 705 to 757 (KNPVAPPTTGGNTPPTTNNGGNTTPPSANIPGSDTSNTSTGNSASTTSTMNAY). A compositionally biased stretch (low complexity) spans 711–753 (PTTGGNTPPTTNNGGNTTPPSANIPGSDTSNTSTGNSASTTST). The LPXTG sorting signal signature appears at 767–771 (LPTTG). Pentaglycyl murein peptidoglycan amidated threonine is present on Thr-770. Positions 771–800 (GDSDNALYLLLGLLAVGTAMALTKKARASK) are cleaved as a propeptide — removed by sortase A.

Belongs to the internalin family.

The protein localises to the secreted. It is found in the cell wall. In terms of biological role, mediates the entry of Listeria monocytogenes into cells. Binds to host receptor cadherin-1 (E-cadherin, CDH1). In Listeria monocytogenes serotype 1/2a (strain 10403S), this protein is Internalin A (inlA).